The chain runs to 192 residues: MKIGYARVSTGLQNLNLQEDRLNQYGCEKIFSDHISGAKSKRPGLDRAIEFARSGDTIVVWRLDRLGRNMADLITLVNELNNRGVSFHSLEENITMDKSSSTGQLLFHLFAAFAEFERNLILERSSAGRIAARARGRYGGRPEKLNKQDLTLLKTLYDNGTPIKTIAEQWKVSRTTIYRYLNKLNNQENKDK.

The Resolvase/invertase-type recombinase catalytic domain occupies 1 to 136; that stretch reads MKIGYARVST…AGRIAARARG (136 aa). The O-(5'-phospho-DNA)-serine intermediate role is filled by S9. Positions 163 to 182 form a DNA-binding region, H-T-H motif; sequence IKTIAEQWKVSRTTIYRYLN.

Belongs to the site-specific recombinase resolvase family.

In terms of biological role, DNA-invertase, mediating the inversion of inv. This chain is Transposon Tn552 DNA-invertase BinR (resR), found in Staphylococcus aureus.